We begin with the raw amino-acid sequence, 304 residues long: Recombination-associated protein RdgC (304 aa).

The protein belongs to the RdgC family.

Its subcellular location is the cytoplasm. The protein localises to the nucleoid. May be involved in recombination. The protein is Recombination-associated protein RdgC of Shewanella baltica (strain OS223).